A 357-amino-acid chain; its full sequence is Cinnamyl alcohol dehydrogenase 5 (357 aa).

Cysteine 47 is a binding site for Zn(2+). Threonine 49 is a binding site for NADP(+). Zn(2+) contacts are provided by histidine 69, glutamate 70, cysteine 100, cysteine 103, cysteine 106, cysteine 114, and cysteine 163. Residues threonine 167, 188 to 193, 211 to 216, threonine 251, glycine 275, and 298 to 300 each bind NADP(+); these read GLGGVG, SSSNKK, and SFI.

The protein belongs to the zinc-containing alcohol dehydrogenase family. Homodimer. Requires Zn(2+) as cofactor. Expressed at the lateral root initiation sites, in the vascular tissues of the primary lateral root and the root caps. Expressed in the hypocotyl, cotyledon and leaf veins, apical meristem region, at the base of the trichomes, hydathodes and cauline leaves. In stems, expressed in the cells associated with the vascular cambium, interfascicular cambium and the developing xylem. Expressed in the vascular strand of petals and sepals, anthers, stamen filaments, stigma in flowers, and abscission, style and stigmatic regions of siliques.

It catalyses the reaction (E)-cinnamyl alcohol + NADP(+) = (E)-cinnamaldehyde + NADPH + H(+). It carries out the reaction (E)-coniferol + NADP(+) = (E)-coniferaldehyde + NADPH + H(+). The catalysed reaction is (E)-sinapyl alcohol + NADP(+) = (E)-sinapaldehyde + NADPH + H(+). The enzyme catalyses (E)-4-coumaroyl alcohol + NADP(+) = (E)-4-coumaraldehyde + NADPH + H(+). It catalyses the reaction (E)-caffeyl alcohol + NADP(+) = (E)-caffeyl aldehyde + NADPH + H(+). The protein operates within aromatic compound metabolism; phenylpropanoid biosynthesis. Functionally, involved in lignin biosynthesis in the floral stem. Catalyzes the final step specific for the production of lignin monomers. Catalyzes the NADPH-dependent reduction of coniferaldehyde, 5-hydroxyconiferaldehyde, sinapaldehyde, 4-coumaraldehyde and caffeyl aldehyde to their respective alcohols. The sequence is that of Cinnamyl alcohol dehydrogenase 5 from Arabidopsis thaliana (Mouse-ear cress).